Consider the following 240-residue polypeptide: UDP-2,3-diacylglucosamine hydrolase (240 aa).

Mn(2+) is bound by residues D8, H10, D41, N79, and H114. Residue 79–80 participates in substrate binding; sequence NR. Substrate contacts are provided by D122, S160, N164, K167, and H195. H195 and H197 together coordinate Mn(2+).

The protein belongs to the LpxH family. Requires Mn(2+) as cofactor.

It is found in the cell inner membrane. It carries out the reaction UDP-2-N,3-O-bis[(3R)-3-hydroxytetradecanoyl]-alpha-D-glucosamine + H2O = 2-N,3-O-bis[(3R)-3-hydroxytetradecanoyl]-alpha-D-glucosaminyl 1-phosphate + UMP + 2 H(+). The protein operates within glycolipid biosynthesis; lipid IV(A) biosynthesis; lipid IV(A) from (3R)-3-hydroxytetradecanoyl-[acyl-carrier-protein] and UDP-N-acetyl-alpha-D-glucosamine: step 4/6. Functionally, hydrolyzes the pyrophosphate bond of UDP-2,3-diacylglucosamine to yield 2,3-diacylglucosamine 1-phosphate (lipid X) and UMP by catalyzing the attack of water at the alpha-P atom. Involved in the biosynthesis of lipid A, a phosphorylated glycolipid that anchors the lipopolysaccharide to the outer membrane of the cell. The sequence is that of UDP-2,3-diacylglucosamine hydrolase from Shigella boydii serotype 18 (strain CDC 3083-94 / BS512).